Consider the following 274-residue polypeptide: Large ribosomal subunit protein uL2 (274 aa).

2 disordered regions span residues 34–53 (IAPIKNSGGRNSQGKMTMRY) and 216–274 (RRPR…RRKK).

It belongs to the universal ribosomal protein uL2 family. As to quaternary structure, part of the 50S ribosomal subunit. Forms a bridge to the 30S subunit in the 70S ribosome.

Its function is as follows. One of the primary rRNA binding proteins. Required for association of the 30S and 50S subunits to form the 70S ribosome, for tRNA binding and peptide bond formation. It has been suggested to have peptidyltransferase activity; this is somewhat controversial. Makes several contacts with the 16S rRNA in the 70S ribosome. The polypeptide is Large ribosomal subunit protein uL2 (Flavobacterium psychrophilum (strain ATCC 49511 / DSM 21280 / CIP 103535 / JIP02/86)).